The primary structure comprises 648 residues: Calpain-5 (648 aa).

A Calpain catalytic domain is found at 28–353 (PFVDTLFPPT…FTDISLCQLF (326 aa)). Catalysis depends on residues C83, H252, and N290. The domain III stretch occupies residues 354–509 (NTSVFSFSRS…VYSDEHIHFS (156 aa)). Positions 502–625 (SDEHIHFSPL…ENRDTTLQLT (124 aa)) constitute a C2 domain.

It belongs to the peptidase C2 family. It depends on Ca(2+) as a cofactor. In terms of tissue distribution, expressed in neuronal, but not in GABA-ergic neurons, intestinal, hypodermal and excretory tissues.

Required for the correct female sexual development of the soma and germline in hermaphrodite animals, while being fully dispensable in males. Has calcium-dependent proteolytic activity and is involved in the cleavage of tra-2, for which it acts as a potentiator. Capable of calcium-dependent autolysis. Part of the necrosis cell death pathway. Required for necrosis of intestinal cells induced by B.thuringiensis endotoxin Cry6Aa. In Caenorhabditis elegans, this protein is Calpain-5.